We begin with the raw amino-acid sequence, 375 residues long: N-acetyldiaminopimelate deacetylase (375 aa).

Asp69 is a catalytic residue. Residue Glu128 is the Proton acceptor of the active site.

This sequence belongs to the peptidase M20A family. N-acetyldiaminopimelate deacetylase subfamily.

The catalysed reaction is N-acetyl-(2S,6S)-2,6-diaminopimelate + H2O = (2S,6S)-2,6-diaminopimelate + acetate. It participates in amino-acid biosynthesis; L-lysine biosynthesis via DAP pathway; LL-2,6-diaminopimelate from (S)-tetrahydrodipicolinate (acetylase route): step 3/3. In terms of biological role, catalyzes the conversion of N-acetyl-diaminopimelate to diaminopimelate and acetate. The protein is N-acetyldiaminopimelate deacetylase of Priestia megaterium (strain ATCC 12872 / QMB1551) (Bacillus megaterium).